Consider the following 391-residue polypeptide: S-adenosylmethionine synthase (391 aa).

His14 serves as a coordination point for ATP. Residue Asp16 participates in Mg(2+) binding. Position 42 (Glu42) interacts with K(+). Positions 55 and 98 each coordinate L-methionine. The flexible loop stretch occupies residues 98-108 (QSVDIAIGVDE). Residues 172 to 174 (DGK), 238 to 239 (RF), Asp247, 253 to 254 (RK), Ala270, and Lys274 each bind ATP. Asp247 provides a ligand contact to L-methionine. An L-methionine-binding site is contributed by Lys278.

It belongs to the AdoMet synthase family. Homotetramer; dimer of dimers. It depends on Mg(2+) as a cofactor. K(+) serves as cofactor.

It localises to the cytoplasm. The catalysed reaction is L-methionine + ATP + H2O = S-adenosyl-L-methionine + phosphate + diphosphate. The protein operates within amino-acid biosynthesis; S-adenosyl-L-methionine biosynthesis; S-adenosyl-L-methionine from L-methionine: step 1/1. Its function is as follows. Catalyzes the formation of S-adenosylmethionine (AdoMet) from methionine and ATP. The overall synthetic reaction is composed of two sequential steps, AdoMet formation and the subsequent tripolyphosphate hydrolysis which occurs prior to release of AdoMet from the enzyme. The sequence is that of S-adenosylmethionine synthase from Clostridium botulinum (strain Okra / Type B1).